An 896-amino-acid chain; its full sequence is DNA mismatch repair protein MutS (896 aa).

Gly618–Ser625 contacts ATP. A compositionally biased stretch (basic and acidic residues) spans Gly805 to Ser825. Residues Gly805–Asp826 are disordered.

The protein belongs to the DNA mismatch repair MutS family.

Its function is as follows. This protein is involved in the repair of mismatches in DNA. It is possible that it carries out the mismatch recognition step. This protein has a weak ATPase activity. In Halothermothrix orenii (strain H 168 / OCM 544 / DSM 9562), this protein is DNA mismatch repair protein MutS.